Reading from the N-terminus, the 407-residue chain is MKRAFIMVLDSFGIGATEDAERFGDVGADTLGHIAEACAKGKADNGRKGPLNLPNLTRLGLAKAHEGSTGFIPAGMDGNAEVIGAYAWAHEMSSGKDTPSGHWEIAGVPVLFEWGYFSDHENSFPQELLDKLVERANLPGYLGNCHSSGTVILDQLGEEHMKTGKPIFYTSADSVFQIACHEETFGLDKLYELCEIAREELINGGYNIGRVIARPFIGDKAGNFQRTGNRHDLAVEPPAPTVLQKLVDEKHGQVVSVGKIADIYANCGITKKVKATGLDALFDATIKEMKEAGDNTIVFTNFVDFDSSWGHRRDVAGYAAGLELFDRRLPELMSLLRDDDILILTADHGCDPTWTGTDHTREHIPVLVYGPKVKPGSLGHRETFADIGQTLAKYFGTSDMEYGKAMF.

Mn(2+)-binding residues include Asp-10, Asp-306, His-311, Asp-347, His-348, and His-359.

This sequence belongs to the phosphopentomutase family. It depends on Mn(2+) as a cofactor.

Its subcellular location is the cytoplasm. It carries out the reaction 2-deoxy-alpha-D-ribose 1-phosphate = 2-deoxy-D-ribose 5-phosphate. The catalysed reaction is alpha-D-ribose 1-phosphate = D-ribose 5-phosphate. Its pathway is carbohydrate degradation; 2-deoxy-D-ribose 1-phosphate degradation; D-glyceraldehyde 3-phosphate and acetaldehyde from 2-deoxy-alpha-D-ribose 1-phosphate: step 1/2. Functionally, isomerase that catalyzes the conversion of deoxy-ribose 1-phosphate (dRib-1-P) and ribose 1-phosphate (Rib-1-P) to deoxy-ribose 5-phosphate (dRib-5-P) and ribose 5-phosphate (Rib-5-P), respectively. The protein is Phosphopentomutase of Shigella dysenteriae serotype 1 (strain Sd197).